A 150-amino-acid chain; its full sequence is Galactose-binding lectin (150 aa).

D-galactose contacts are provided by H16 and G19. N-linked (GlcNAc...) asparagine glycosylation is present at N26. D-galactose-binding positions include D27, 35 to 37, H64, and G67; that span reads DIH. N74 carries an N-linked (GlcNAc...) asparagine glycan. D-galactose-binding positions include E75, 83–85, H108, and G111; that span reads DRH. Residue N118 is glycosylated (N-linked (GlcNAc...) asparagine). D-galactose-binding positions include E119 and 127–129; that span reads DKH.

As to quaternary structure, homodimer. Likely to form large oligomers; oligomerization enhances hemagglutination activity. Post-translationally, glycosylated.

With respect to regulation, hemagglutination activity is not dependent on divalent cations. Hemagglutination activity is highly inhibited by D-galactose and N-acetyl-D-galactosamine, and to a lesser extent by raffinose. Also inhibited by melibiose and alpha-lactose, but not by beta-lactose or D-glucose. D-galactose-binding lectin. Also binds N-acetyl-D-galactosamine. Has hemagglutination activity towards all types of human erythrocytes (O, A and B) and rabbit erythrocytes. Agglutinates Gram-negative and Gram-positive bacteria including E.coli DH5-alpha and L.plantarum ATCC8014, respectively, and has bacteriostatic activity against them. Also agglutinates M.lysodeikticus. May be involved in innate immunity by recognizing and eliminating pathogens. The sequence is that of Galactose-binding lectin from Mytilus californianus (California mussel).